The chain runs to 426 residues: 3-phosphoshikimate 1-carboxyvinyltransferase (426 aa).

The 3-phosphoshikimate site is built by Lys22, Ser23, and Arg27. Lys22 is a binding site for phosphoenolpyruvate. The phosphoenolpyruvate site is built by Gly96 and Arg124. Residues Ser170, Ser171, Gln172, Ser198, Asp314, Asn337, and Lys341 each coordinate 3-phosphoshikimate. Gln172 provides a ligand contact to phosphoenolpyruvate. Asp314 (proton acceptor) is an active-site residue. Phosphoenolpyruvate-binding residues include Arg345, Arg387, and Lys412.

It belongs to the EPSP synthase family. As to quaternary structure, monomer.

It is found in the cytoplasm. It carries out the reaction 3-phosphoshikimate + phosphoenolpyruvate = 5-O-(1-carboxyvinyl)-3-phosphoshikimate + phosphate. It participates in metabolic intermediate biosynthesis; chorismate biosynthesis; chorismate from D-erythrose 4-phosphate and phosphoenolpyruvate: step 6/7. Functionally, catalyzes the transfer of the enolpyruvyl moiety of phosphoenolpyruvate (PEP) to the 5-hydroxyl of shikimate-3-phosphate (S3P) to produce enolpyruvyl shikimate-3-phosphate and inorganic phosphate. The chain is 3-phosphoshikimate 1-carboxyvinyltransferase from Shewanella loihica (strain ATCC BAA-1088 / PV-4).